A 561-amino-acid chain; its full sequence is V-type proton ATPase catalytic subunit A (561 aa).

190-197 (GAFGCGKT) contacts ATP.

The protein belongs to the ATPase alpha/beta chains family. In terms of assembly, V-ATPase is a heteromultimeric enzyme composed of a peripheral catalytic V1 complex (main components: subunits A, B, C, D, E, and F) attached to an integral membrane V0 proton pore complex (main component: the proteolipid protein). In terms of tissue distribution, high expression in the mesocotyl tip of etiolated seedlings compared to the base.

It carries out the reaction ATP + H2O + 4 H(+)(in) = ADP + phosphate + 5 H(+)(out). Its function is as follows. Catalytic subunit of the peripheral V1 complex of vacuolar ATPase. V-ATPase vacuolar ATPase is responsible for acidifying a variety of intracellular compartments in eukaryotic cells. The protein is V-type proton ATPase catalytic subunit A of Zea mays (Maize).